Consider the following 176-residue polypeptide: ATP-dependent protease subunit HslV (176 aa).

The active site involves threonine 2. Na(+)-binding residues include serine 157, cysteine 160, and threonine 163.

Belongs to the peptidase T1B family. HslV subfamily. A double ring-shaped homohexamer of HslV is capped on each side by a ring-shaped HslU homohexamer. The assembly of the HslU/HslV complex is dependent on binding of ATP.

It is found in the cytoplasm. It catalyses the reaction ATP-dependent cleavage of peptide bonds with broad specificity.. With respect to regulation, allosterically activated by HslU binding. In terms of biological role, protease subunit of a proteasome-like degradation complex believed to be a general protein degrading machinery. This is ATP-dependent protease subunit HslV from Buchnera aphidicola subsp. Baizongia pistaciae (strain Bp).